Consider the following 621-residue polypeptide: Archaeal Lon protease (621 aa).

Topologically, residues 1 to 117 (MNEEVREILG…YKEEAMKKAQ (117 aa)) are cytoplasmic. 54–61 (GSPGTGKS) serves as a coordination point for ATP. The helical transmembrane segment at 118–136 (ARNFLIFTLVFLVIGYTVL) threads the bilayer. Residues 137-141 (TNPGN) are Extracellular-facing. The chain crosses the membrane as a helical span at residues 142–160 (LIWGIIAAVLILMMSRYFI). The Cytoplasmic segment spans residues 161-621 (PREDRNVPKL…KFKELELAAV (461 aa)). Residues 423–602 (GYEVGRVNGL…NEVLEHVLED (180 aa)) form the Lon proteolytic domain. Catalysis depends on residues serine 509 and lysine 552.

It belongs to the peptidase S16 family. Archaeal LonB subfamily. In terms of assembly, homohexamer. Organized in a ring with a central cavity.

The protein localises to the cell membrane. In terms of biological role, ATP-dependent serine protease that mediates the selective degradation of mutant and abnormal proteins as well as certain short-lived regulatory proteins. Degrades polypeptides processively. The protein is Archaeal Lon protease of Archaeoglobus fulgidus (strain ATCC 49558 / DSM 4304 / JCM 9628 / NBRC 100126 / VC-16).